Reading from the N-terminus, the 133-residue chain is Large ribosomal subunit protein uL15 (133 aa).

The disordered stretch occupies residues 1–64 (MGLENLKPAK…QPLQRRLPKI (64 aa)).

This sequence belongs to the universal ribosomal protein uL15 family. In terms of assembly, part of the 50S ribosomal subunit.

Functionally, binds to the 23S rRNA. In Helicobacter pylori (strain Shi470), this protein is Large ribosomal subunit protein uL15.